The following is a 410-amino-acid chain: MDTFILTYSILFLALFIESIHSRYSRVAEHIRTRKRPDKELTEEEFKLVFHRSSTEEIDYDFVNLTTEITEIERKVLFTIDDKDYHLKLTRASSSVIPSGTLIRSAILWTDNQTHFHDEDSTDEHWGSSHIYEDLDKMATFLLRDDDDFTRYDGVFGGGKDMKVVGSLPARLVNIYGANYHFIYYANGSVSDVILNGAKQVVGSANTQAGLNNFYPKLLVLVDYTLFKILNKSYEETIRYLAIFWNAVDMKFKKFETPKINIIITGIIVPKNEGALKHVYDARIKSDMQKVNATKIITNSEHFFGANFSTESYFDNYDATFTMASLNDLEGQTGLAYIGAICKNNHNNAYVKDSGVFSGVLAAAHELGHLLASDHDEDVGCPGEINYNTRLTGTIMAEYRNNNVSKFIWS.

The signal sequence occupies residues 1–22; sequence MDTFILTYSILFLALFIESIHS. N-linked (GlcNAc...) asparagine glycans are attached at residues Asn64, Asn112, Asn187, Asn231, Asn292, and Asn307. In terms of domain architecture, Peptidase M12B spans 214–410; it reads FYPKLLVLVD…NNNVSKFIWS (197 aa). Zn(2+) is bound at residue His365. The active site involves Glu366. Zn(2+)-binding residues include His369 and His375. N-linked (GlcNAc...) asparagine glycosylation is present at Asn403.

It in the C-terminal section; belongs to the venom metalloproteinase (M12B) family. Monomer. Zn(2+) serves as cofactor. Expressed by the venom gland.

The protein resides in the secreted. With respect to regulation, the gelatinase activity is inhibited by EDTA. Its function is as follows. The recombinant protein has gelatinase activity. In vivo, injection of this recombinant into fifth instar L.oleracea (host) larvae results in partial insect mortality associated with the molt to sixth instar, with surviving insects showing retarded development and growth. The chain is Venom metalloproteinase 2 from Eulophus pennicornis (Parasitoid wasp).